We begin with the raw amino-acid sequence, 472 residues long: Gamma-glutamylputrescine synthetase PuuA (472 aa).

In terms of domain architecture, GS beta-grasp spans 35–129; that stretch reads PNTQYVDVLL…MLLTMVDEDG (95 aa). Positions 136–472 constitute a GS catalytic domain; it reads PRNVLNRLWQ…TEIEWMLKNA (337 aa).

The protein belongs to the glutamine synthetase family. Dodecamer. The cofactor is Mg(2+). Requires Mn(2+) as cofactor.

It catalyses the reaction putrescine + L-glutamate + ATP = gamma-L-glutamylputrescine + ADP + phosphate + H(+). It functions in the pathway amine and polyamine degradation; putrescine degradation; 4-aminobutanoate from putrescine: step 1/4. Functionally, involved in the breakdown of putrescine. Catalyzes the ATP-dependent gamma-glutamylation of putrescine, producing gamma-L-glutamylputrescine. Absolutely essential to utilize putrescine as both nitrogen and carbon sources and to decrease the toxicity of putrescine, which can lead to inhibition of cell growth and protein synthesis. In vitro is also able to use several diamines, and spermidine and spermine, instead of putrescine, but with a much lower activity, and cannot catalyze the gamma-glutamylation of ornithine or GABA. This chain is Gamma-glutamylputrescine synthetase PuuA, found in Escherichia coli (strain K12).